Reading from the N-terminus, the 102-residue chain is Small ribosomal subunit protein uS10 (102 aa).

The protein belongs to the universal ribosomal protein uS10 family. In terms of assembly, part of the 30S ribosomal subunit.

Its function is as follows. Involved in the binding of tRNA to the ribosomes. The sequence is that of Small ribosomal subunit protein uS10 from Lacticaseibacillus casei (strain BL23) (Lactobacillus casei).